The sequence spans 408 residues: UV excision repair protein RAD23 homolog B (408 aa).

A Ubiquitin-like domain is found at 1–79 (MLVTLKTLQQ…VVVMVTKPKA (79 aa)). Low complexity predominate over residues 80 to 111 (VTTPAPATTQQSNSAATTTVSSSTAPAVTQAP). A disordered region spans residues 80 to 176 (VTTPAPATTQ…TSGDSSRSNL (97 aa)). Over residues 112–122 (APAPASAPTPT) the composition is skewed to pro residues. Over residues 123-143 (PVSVTPAPTTASSEPAPASAA) the composition is skewed to low complexity. Over residues 144 to 153 (KQEKPAERPV) the composition is skewed to basic and acidic residues. Residues 154–174 (ETPVATTPTSTDSTSGDSSRS) are compositionally biased toward low complexity. A phosphothreonine mark is found at Thr155 and Thr164. Position 174 is a phosphoserine (Ser174). The residue at position 186 (Thr186) is a Phosphothreonine. The 41-residue stretch at 188-228 (QSYENMVTEIMSMGYEREQVIAALRASFNNPDRAVEYLLMG) folds into the UBA 1 domain. Position 199 is a phosphoserine (Ser199). A Phosphotyrosine modification is found at Tyr202. A disordered region spans residues 236 to 274 (QAVVDPPPAASTGAPQSSVAAAAATTTATTTTTSSGGHP). Positions 255 to 268 (AAAAATTTATTTTT) are enriched in low complexity. An STI1 domain is found at 273 to 316 (HPLEFLRNQPQFQQMRQIIQQNPSLLPALLQQIGRENPQLLQQI). Residues 363 to 403 (PQEKEAIERLKALGFPEGLVIQAYFACEKNENLAANFLLQQ) enclose the UBA 2 domain.

The protein belongs to the RAD23 family. Component of the XPC complex composed of XPC, RAD23B and CETN2. Interacts with NGLY1 and PSMC1. Interacts with ATXN3. Interacts with PSMD4 and PSMC5. Interacts with AMFR. Interacts with VCP; the interaction is indirect and mediated by NGLY1.

Its subcellular location is the nucleus. It localises to the cytoplasm. Its function is as follows. Multiubiquitin chain receptor involved in modulation of proteasomal degradation. Binds to polyubiquitin chains. Proposed to be capable to bind simultaneously to the 26S proteasome and to polyubiquitinated substrates and to deliver ubiquitinated proteins to the proteasome. May play a role in endoplasmic reticulum-associated degradation (ERAD) of misfolded glycoproteins by association with PNGase and delivering deglycosylated proteins to the proteasome. Functionally, involved in global genome nucleotide excision repair (GG-NER) by acting as component of the XPC complex. Cooperatively with CETN2 appears to stabilize XPC. May protect XPC from proteasomal degradation. In terms of biological role, the XPC complex is proposed to represent the first factor bound at the sites of DNA damage and together with other core recognition factors, XPA, RPA and the TFIIH complex, is part of the pre-incision (or initial recognition) complex. The XPC complex recognizes a wide spectrum of damaged DNA characterized by distortions of the DNA helix such as single-stranded loops, mismatched bubbles or single-stranded overhangs. The orientation of XPC complex binding appears to be crucial for inducing a productive NER. XPC complex is proposed to recognize and to interact with unpaired bases on the undamaged DNA strand which is followed by recruitment of the TFIIH complex and subsequent scanning for lesions in the opposite strand in a 5'-to-3' direction by the NER machinery. Cyclobutane pyrimidine dimers (CPDs) which are formed upon UV-induced DNA damage esacpe detection by the XPC complex due to a low degree of structural perurbation. Instead they are detected by the UV-DDB complex which in turn recruits and cooperates with the XPC complex in the respective DNA repair. In vitro, the XPC:RAD23B dimer is sufficient to initiate NER; it preferentially binds to cisplatin and UV-damaged double-stranded DNA and also binds to a variety of chemically and structurally diverse DNA adducts. XPC:RAD23B contacts DNA both 5' and 3' of a cisplatin lesion with a preference for the 5' side. XPC:RAD23B induces a bend in DNA upon binding. XPC:RAD23B stimulates the activity of DNA glycosylases TDG and SMUG1. In Bos taurus (Bovine), this protein is UV excision repair protein RAD23 homolog B (RAD23B).